The primary structure comprises 178 residues: Extracellular fatty acid-binding protein (178 aa).

Residues 1–20 (MRTLALSLGLALLCLLHAKA) form the signal peptide. Thr-43 contributes to the enterobactin binding site. Positions 72 and 104 each coordinate 1-tetradecanoyl-sn-glycerol 3-phosphate. A disulfide bridge connects residues Cys-80 and Cys-173. 3 residues coordinate enterobactin: Lys-104, Arg-123, and Arg-134. 134 to 136 (RLY) is a 1-tetradecanoyl-sn-glycerol 3-phosphate binding site.

Belongs to the calycin superfamily. Lipocalin family. In terms of assembly, monomer.

The protein resides in the secreted. Siderocalin-like lipocalin tightly binding a variety of bacterial ferric siderophores, also binds long-chain unsaturated fatty acids such as linoleic acid, oleic acid, arachidonic acid and, with a lower affinity, long chain saturated fatty acids such as steraic acid. May act as an antibacterial factor, through dual ligand specificity, both as a siderophore-sequestrating molecule and a lysophosphatidic acid (LPA) sensor. This chain is Extracellular fatty acid-binding protein, found in Coturnix japonica (Japanese quail).